Reading from the N-terminus, the 277-residue chain is Putative pyruvate, phosphate dikinase regulatory protein (277 aa).

ADP is bound at residue 156–163 (GVSRTSKT).

This sequence belongs to the pyruvate, phosphate/water dikinase regulatory protein family. PDRP subfamily.

The catalysed reaction is N(tele)-phospho-L-histidyl/L-threonyl-[pyruvate, phosphate dikinase] + ADP = N(tele)-phospho-L-histidyl/O-phospho-L-threonyl-[pyruvate, phosphate dikinase] + AMP + H(+). It catalyses the reaction N(tele)-phospho-L-histidyl/O-phospho-L-threonyl-[pyruvate, phosphate dikinase] + phosphate + H(+) = N(tele)-phospho-L-histidyl/L-threonyl-[pyruvate, phosphate dikinase] + diphosphate. Functionally, bifunctional serine/threonine kinase and phosphorylase involved in the regulation of the pyruvate, phosphate dikinase (PPDK) by catalyzing its phosphorylation/dephosphorylation. The protein is Putative pyruvate, phosphate dikinase regulatory protein of Carboxydothermus hydrogenoformans (strain ATCC BAA-161 / DSM 6008 / Z-2901).